The chain runs to 712 residues: Patatin-like phospholipase domain-containing protein AFUA_1G04970 (712 aa).

Residues 1-13 (MTSDEKSATRDIY) show a composition bias toward basic and acidic residues. The interval 1-20 (MTSDEKSATRDIYDPNTLPD) is disordered. Residues 85–105 (WPFLFTVFAWITVLGFAYTLT) form a helical membrane-spanning segment. The PNPLA domain maps to 275 to 466 (LCLSGGATFA…RTDIPIKALN (192 aa)). Residues 306-310 (GTSGG) carry the GXSXG motif. The Nucleophile role is filled by Ser-308. Residue Asp-453 is the Proton acceptor of the active site. The disordered stretch occupies residues 628–688 (RRRQDRAQEH…PDARRSSMFE (61 aa)). Basic and acidic residues-rich tracts occupy residues 632–646 (DRAQ…ERLD) and 652–664 (RQSD…HYAE). The span at 667 to 676 (DSLSATSSRP) shows a compositional bias: polar residues. The segment covering 677-688 (HTPDARRSSMFE) has biased composition (basic and acidic residues).

It belongs to the PLPL family.

The protein localises to the membrane. In terms of biological role, probable lipid hydrolase. The sequence is that of Patatin-like phospholipase domain-containing protein AFUA_1G04970 from Aspergillus fumigatus (strain ATCC MYA-4609 / CBS 101355 / FGSC A1100 / Af293) (Neosartorya fumigata).